We begin with the raw amino-acid sequence, 371 residues long: Barbiturase 2 (371 aa).

Positions 1-104 (MTRPIEVRKV…TIFAYAPEGR (104 aa)) are RU A. Residues Arg53 and 83-84 (SG) each bind substrate. Residues 112–247 (RVTVGYAMSE…AQIVVVGNAR (136 aa)) form an RU B region. The active site involves Lys162. Substrate is bound by residues Asn194 and 230 to 231 (SS). Ser230 functions as the Nucleophile in the catalytic mechanism. Positions 253 to 371 (FRVGHSIMKD…PVIAIVDLEA (119 aa)) are RU C. Residue Glu303 coordinates Mg(2+). Substrate contacts are provided by residues Lys330 and 349 to 350 (SV). 5 residues coordinate Mg(2+): Ala352, Gln355, Gly356, Pro357, and Gly360.

The protein belongs to the cyclic amide hydrolase (CyAH) family. As to quaternary structure, homotetramer.

The catalysed reaction is barbiturate + H2O = 3-oxo-3-ureidopropanoate. The protein operates within pyrimidine metabolism; uracil degradation via oxidative pathway; malonate and urea from uracil: step 2/3. Its function is as follows. Responsible for the hydrolysis of barbituric acid (2,4,6-trihydroxy-1,3-pyrimidine), an intermediate in the oxidative catabolism of pyrimidines. Catalyzes the hydrolytic opening of the pyrimidine ring of barbituric acid to yield ureidomalonic acid. Can also use cyanuric acid as a substrate, albeit with lower efficiency. The chain is Barbiturase 2 from Nocardioides sp. (strain ATCC BAA-499 / JS614).